A 258-amino-acid chain; its full sequence is Small ribosomal subunit protein uS2 (258 aa).

The tract at residues 227-258 (GEQFAPASEQKEEVKTQEVQEVEDSNDDVIDD) is disordered. A compositionally biased stretch (basic and acidic residues) spans 235-244 (EQKEEVKTQE). The span at 246–258 (QEVEDSNDDVIDD) shows a compositional bias: acidic residues.

Belongs to the universal ribosomal protein uS2 family.

In Caldicellulosiruptor saccharolyticus (strain ATCC 43494 / DSM 8903 / Tp8T 6331), this protein is Small ribosomal subunit protein uS2.